A 475-amino-acid polypeptide reads, in one-letter code: BICD family-like cargo adapter 2 (475 aa).

Residues 56-275 are a coiled coil; it reads ELGKALLERN…LKELQDELHM (220 aa). 2 stretches are compositionally biased toward polar residues: residues 286–300 and 308–318; these read HSSLHSEIQQSTAVQ and SAETQSITSGY. A disordered region spans residues 286–318; the sequence is HSSLHSEIQQSTAVQNHEKGRNSAETQSITSGY. The stretch at 340-413 forms a coiled coil; the sequence is RLQDQVTMQH…ESLNLQLLST (74 aa). Low complexity predominate over residues 440-450; the sequence is QSQKQQETQKP. A disordered region spans residues 440-459; the sequence is QSQKQQETQKPPESPQNSFL.

Belongs to the BICDR family.

The polypeptide is BICD family-like cargo adapter 2 (bicdl2) (Xenopus tropicalis (Western clawed frog)).